Reading from the N-terminus, the 248-residue chain is Type II secretion system protein N (248 aa).

The Cytoplasmic segment spans residues 1-6 (MKLKSG). A helical; Signal-anchor for type II membrane protein transmembrane segment spans residues 7 to 27 (IVTGVALVLAYGLFLASYAPA). The Periplasmic portion of the chain corresponds to 28–248 (RLLTAVPLPA…RTLNFQGRLL (221 aa)).

This sequence belongs to the GSP N family.

It is found in the cell inner membrane. Functionally, involved in a type II secretion system (T2SS, formerly general secretion pathway, GSP) for the export of proteins. Required for the translocation of the multiple pectic enzymes. This Pectobacterium carotovorum subsp. carotovorum (Erwinia carotovora subsp. carotovora) protein is Type II secretion system protein N (outN).